The primary structure comprises 353 residues: MNSIDLASLAAATPTLRHDWTREQAAAIYNLPFADLIFRAQTIHRQSFDANEVQCNQLLNVKTGGCAEDCGYCSQSAHHDTALPASKLMDPKKVIEGAKAARDAGATRYCMGAAWRSPKDRDMAPVIEMVKGVKALGMEACMTLGMLTDDQAQQLADAGLDYYNHNIDTSEEFYSSVVKSRSFGDRLDTLATVQDAGIKVCCGGILGLGEKPTDRVEMLRTLANLPQHPESVPINMLIPIEGTPIAKTAKPVDPFEFVRTIALARIMMPKSDVRLAAGRTAMSDEMQSLCFLAGANSIFIGDTLLTTPNPGDSKDRMLFARLGITPREGAPVEAHSHDHDHDHHDHHHGHSHS.

Residues 51-270 (NEVQCNQLLN…IALARIMMPK (220 aa)) form the Radical SAM core domain. The [4Fe-4S] cluster site is built by Cys-66, Cys-70, and Cys-73. Residues Cys-110, Cys-141, Cys-201, and Arg-274 each contribute to the [2Fe-2S] cluster site. A disordered region spans residues 330–353 (APVEAHSHDHDHDHHDHHHGHSHS). Over residues 334 to 343 (AHSHDHDHDH) the composition is skewed to basic and acidic residues. Over residues 344 to 353 (HDHHHGHSHS) the composition is skewed to basic residues.

The protein belongs to the radical SAM superfamily. Biotin synthase family. Homodimer. [4Fe-4S] cluster serves as cofactor. It depends on [2Fe-2S] cluster as a cofactor.

The catalysed reaction is (4R,5S)-dethiobiotin + (sulfur carrier)-SH + 2 reduced [2Fe-2S]-[ferredoxin] + 2 S-adenosyl-L-methionine = (sulfur carrier)-H + biotin + 2 5'-deoxyadenosine + 2 L-methionine + 2 oxidized [2Fe-2S]-[ferredoxin]. It functions in the pathway cofactor biosynthesis; biotin biosynthesis; biotin from 7,8-diaminononanoate: step 2/2. Functionally, catalyzes the conversion of dethiobiotin (DTB) to biotin by the insertion of a sulfur atom into dethiobiotin via a radical-based mechanism. The protein is Biotin synthase of Rhodopseudomonas palustris (strain HaA2).